The sequence spans 48 residues: uncharacterized protein (48 aa).

The segment at 1–48 is disordered; it reads MLFCNNNNNNNNNNNNNNNNNNNNNNNNNNNNNNNNNNNSSNNNNFSR.

This is an uncharacterized protein from Dictyostelium discoideum (Social amoeba).